The chain runs to 194 residues: Extracellular globin-E1 (194 aa).

Globin domains lie at 1 to 45 and 55 to 194; these read DISH…MGLS and GLSG…LRQA. Histidine 150 is a binding site for heme b.

It belongs to the globin family. In terms of assembly, artemia hemoglobin is a dimer of two similar sized subunits. Each subunit represents a globin chain which exists in two forms (alpha and beta), thus making possible three different phenotypes (HB1, alpha(2), HB2, alpha/beta, HB3, beta(2)). The globin chain is a polymer of eight heme-binding covalently linked domains.

In Artemia sp. (Brine shrimp), this protein is Extracellular globin-E1.